The sequence spans 293 residues: Energy-coupling factor transporter ATP-binding protein EcfA2 (293 aa).

The 244-residue stretch at 3 to 246 folds into the ABC transporter domain; the sequence is ITFQKVEHRY…ADELEKIGVD (244 aa). Residue 40 to 47 participates in ATP binding; that stretch reads GHTGSGKS.

The protein belongs to the ABC transporter superfamily. Energy-coupling factor EcfA family. As to quaternary structure, forms a stable energy-coupling factor (ECF) transporter complex composed of 2 membrane-embedded substrate-binding proteins (S component), 2 ATP-binding proteins (A component) and 2 transmembrane proteins (T component).

Its subcellular location is the cell membrane. Its function is as follows. ATP-binding (A) component of a common energy-coupling factor (ECF) ABC-transporter complex. Unlike classic ABC transporters this ECF transporter provides the energy necessary to transport a number of different substrates. In Bacillus thuringiensis (strain Al Hakam), this protein is Energy-coupling factor transporter ATP-binding protein EcfA2.